We begin with the raw amino-acid sequence, 339 residues long: Glycerol-3-phosphate dehydrogenase [NAD(P)+] (339 aa).

The NADPH site is built by Ser14, Tyr15, His35, and Lys109. Sn-glycerol 3-phosphate contacts are provided by Lys109, Gly138, and Thr140. Ala142 is a binding site for NADPH. Sn-glycerol 3-phosphate is bound by residues Lys194, Asp247, Ser257, Arg258, and Asn259. The active-site Proton acceptor is the Lys194. NADPH is bound at residue Arg258. NADPH-binding residues include Val282 and Glu284.

This sequence belongs to the NAD-dependent glycerol-3-phosphate dehydrogenase family.

It is found in the cytoplasm. It catalyses the reaction sn-glycerol 3-phosphate + NAD(+) = dihydroxyacetone phosphate + NADH + H(+). The catalysed reaction is sn-glycerol 3-phosphate + NADP(+) = dihydroxyacetone phosphate + NADPH + H(+). It participates in membrane lipid metabolism; glycerophospholipid metabolism. Catalyzes the reduction of the glycolytic intermediate dihydroxyacetone phosphate (DHAP) to sn-glycerol 3-phosphate (G3P), the key precursor for phospholipid synthesis. The chain is Glycerol-3-phosphate dehydrogenase [NAD(P)+] from Shewanella amazonensis (strain ATCC BAA-1098 / SB2B).